The primary structure comprises 885 residues: MEIRVGSAVFSSRFDSGNLARVERVEASEAAGESSRSASVPQPDYEFNVWTRPDCASTEFENGNRSWFYFSVRGLLPGKLLKINMMNMNKQSKLYTQGMAPFVRTLPVKTRWERVRDRPTFEMSDSQFILSFVHRLLDVRGVTTYFSFCYPFSYAECQDMMLQLDHKFLSSTSTHTACSPPESIYYHRELLCHSLDGHRVDLITVSSCHGLLEEREPRLDKLFPDLSTARSHRFTGKRVFFVSSRVHPGETPSSFVFNGFLNFILSQEDPRAQTLRRMFVFKLIPMLNPDGVVRGHYRTDSRGVNLNRQYVNPSPDLHPSIYGAKSLLLYHHIHNRLGHASGSALKTSNQSNTSPPVATPTERERCMNLRNEAERGEGPTFDLSEIPMQLEESWEKSGVQREAEHSDENESAQSRGETNSAPSEQVPPQESGVAYYIDLHGHASKRGCFMYGNNLTEESQQVENMLYAKLISLNCAHFDFLGCNFSEKNMYARDKRDGQSKEGSGRVAIHKAIGLVHSYTLECNYNTGRSVNTIPPACHDNGRATPPPPPAFPPKYTPEVYEQVGRAVAVAALDMAECNPWPRLVLSEHSSLLNLRASILKHVRNSTGLTSNNRRNTHCKTSSSPPKPVSLSTSASENSLNRTRSTTNVQGSRQTPQLKSSPSFTFGTTAHRPSHRSLGPVRECKAQEKRRPPPPPLPHHHHQQHQRLSVRLSAPVRAPLSPSSSSSSSSSSPSSSSSAPGPGSISLAGNSCPEFRPANQIKELRGGRGKGGRSGPAYCHSSQQRTALTTKEPLQDSLDILTSIEYSRCELQPRPSRIPVRRELQSSVIPLSSTETPTMRVWKLIKPGLKKHLAGVSGKDRLSTKALLKNSSRQTDQHIHRSLPT.

The region spanning 150 to 576 is the Peptidase M14 domain; it reads YPFSYAECQD…AVAVAALDMA (427 aa). Zn(2+) contacts are provided by His247 and Glu250. Disordered regions lie at residues 341 to 364 and 392 to 428; these read SGSA…TERE and ESWE…QVPP. Polar residues predominate over residues 344–356; it reads ALKTSNQSNTSPP. The segment covering 393–408 has biased composition (basic and acidic residues); the sequence is SWEKSGVQREAEHSDE. The segment covering 411–428 has biased composition (polar residues); it reads SAQSRGETNSAPSEQVPP. Zn(2+) is bound at residue His440. Catalysis depends on Glu522, which acts as the Proton donor/acceptor. The segment covering 606-668 has biased composition (polar residues); that stretch reads STGLTSNNRR…KSSPSFTFGT (63 aa). 2 disordered regions span residues 606–788 and 866–885; these read STGL…RTAL and ALLK…SLPT. Basic and acidic residues predominate over residues 682–691; the sequence is RECKAQEKRR. Residues 712 to 749 are compositionally biased toward low complexity; the sequence is LSAPVRAPLSPSSSSSSSSSSPSSSSSAPGPGSISLAG.

The protein belongs to the peptidase M14 family. Zn(2+) serves as cofactor.

The protein localises to the cytoplasm. The protein resides in the cytosol. It localises to the nucleus. Its subcellular location is the cytoskeleton. It is found in the spindle. The protein localises to the midbody. The catalysed reaction is gamma-L-glutamyl-L-glutamyl-[protein] + H2O = L-glutamyl-[protein] + L-glutamate. It carries out the reaction (L-glutamyl)(n+1)-gamma-L-glutamyl-L-glutamyl-[protein] + H2O = (L-glutamyl)(n)-gamma-L-glutamyl-L-glutamyl-[protein] + L-glutamate. The enzyme catalyses C-terminal L-alpha-aminoacyl-L-glutamyl-[tubulin] + H2O = C-terminal L-alpha-aminoacyl-[tubulin] + L-glutamate. It catalyses the reaction C-terminal L-alpha-aminoacyl-L-glutamyl-L-glutamyl-[tubulin] + H2O = C-terminal L-alpha-aminoacyl-L-glutamyl-[tubulin] + L-glutamate. In terms of biological role, metallocarboxypeptidase that mediates deglutamylation of tubulin and non-tubulin target proteins. Catalyzes the removal of polyglutamate side chains present on the gamma-carboxyl group of glutamate residues within the C-terminal tail of alpha- and beta-tubulin. Cleaves alpha- and gamma-linked polyglutamate tubulin side-chain, as well as the branching point glutamate. Also catalyzes the removal of alpha-linked glutamate residues from the carboxy-terminus of alpha-tubulin. This is Cytosolic carboxypeptidase-like protein 5 (agbl5) from Danio rerio (Zebrafish).